The primary structure comprises 520 residues: Serine protease Hip1 (520 aa).

An N-terminal signal peptide occupies residues 1-30 (MGMRLSRRDKIARMLLIWAALAAVALVLVG). Cys-31 carries the N-palmitoyl cysteine lipid modification. Cys-31 is lipidated: S-diacylglycerol cysteine. The 396-residue stretch at 102 to 497 (GSLVINPGGP…TQHTVVFQGD (396 aa)) folds into the AB hydrolase-1 domain. Residue Ser-228 is the Nucleophile of the active site. Residue Asp-463 is part of the active site. Catalysis depends on His-490, which acts as the Proton donor.

The protein belongs to the peptidase S33 family.

The protein resides in the cell envelope. The protein localises to the cell membrane. Its function is as follows. Serine protease that promotes pathogenesis by promoting the processing and the extracellular release of the M.bovis heat-shock protein GroEL2. Key immunomodulatory virulence factor, which promotes survival in host macrophages and modulates host immune responses. The polypeptide is Serine protease Hip1 (Mycobacterium bovis (strain ATCC BAA-935 / AF2122/97)).